Here is a 197-residue protein sequence, read N- to C-terminus: MTQSKNKVVIFLGPPGAGKGTQAERLAREQNLAKISTGDILRDHVARGTALGQRVKPILDAGQLVPDDILIALIRDRLAGMEPVRVIFDGFPRTCAQAEALDMLLEELGAPVSAVPLLEVPDETLIERIVERGRQAALRGEPVRSDDTEEVARRRQQVYREQTQPLIDYYAARGHLQHVNGVGTPDEVYNRILQVVR.

16–21 serves as a coordination point for ATP; that stretch reads GAGKGT. The interval 36–65 is NMP; the sequence is STGDILRDHVARGTALGQRVKPILDAGQLV. Residues threonine 37, arginine 42, 63–65, 90–93, and glutamine 97 contribute to the AMP site; these read QLV and GFPR. Residues 131–147 are LID; it reads ERGRQAALRGEPVRSDD. Arginine 132 serves as a coordination point for ATP. AMP contacts are provided by arginine 144 and arginine 155. ATP is bound at residue glycine 183.

The protein belongs to the adenylate kinase family. Monomer.

It localises to the cytoplasm. It carries out the reaction AMP + ATP = 2 ADP. It functions in the pathway purine metabolism; AMP biosynthesis via salvage pathway; AMP from ADP: step 1/1. Functionally, catalyzes the reversible transfer of the terminal phosphate group between ATP and AMP. Plays an important role in cellular energy homeostasis and in adenine nucleotide metabolism. In Deinococcus geothermalis (strain DSM 11300 / CIP 105573 / AG-3a), this protein is Adenylate kinase.